We begin with the raw amino-acid sequence, 208 residues long: Small ribosomal subunit protein uS4 (208 aa).

One can recognise an S4 RNA-binding domain in the interval 98-161 (QRLDNVVYRM…KTNSQILRAI (64 aa)).

It belongs to the universal ribosomal protein uS4 family. As to quaternary structure, part of the 30S ribosomal subunit. Contacts protein S5. The interaction surface between S4 and S5 is involved in control of translational fidelity.

In terms of biological role, one of the primary rRNA binding proteins, it binds directly to 16S rRNA where it nucleates assembly of the body of the 30S subunit. With S5 and S12 plays an important role in translational accuracy. This Sulfurovum sp. (strain NBC37-1) protein is Small ribosomal subunit protein uS4.